The primary structure comprises 276 residues: Undecaprenyl-diphosphatase (276 aa).

The next 8 membrane-spanning stretches (helical) occupy residues 6–26 (IEILKVIFLGIVEGITEWLPI), 49–69 (EMFFVVIQLGAILAVVVMFWN), 89–109 (FSLWFKVAVACVPSAIMGILF), 117–137 (LHTPVVIAIMLILYGVLFIVI), 151–171 (LADISYKTALMIGVFQVLSLI), 181–201 (IIGALLIGVSRVAAAEFTFFL), 224–244 (AELLTLVIGMAVAFAVSVFVI), and 256–276 (FKVFGWYRIVLGILVLLITAI).

The protein belongs to the UppP family.

The protein resides in the cell membrane. The enzyme catalyses di-trans,octa-cis-undecaprenyl diphosphate + H2O = di-trans,octa-cis-undecaprenyl phosphate + phosphate + H(+). Functionally, catalyzes the dephosphorylation of undecaprenyl diphosphate (UPP). Confers resistance to bacitracin. The sequence is that of Undecaprenyl-diphosphatase from Enterococcus faecalis (Streptococcus faecalis).